The following is a 117-amino-acid chain: UPF0125 protein VV0820 (117 aa).

The interval Arg90–Asp117 is disordered.

It belongs to the UPF0125 (RnfH) family.

The protein is UPF0125 protein VV0820 of Vibrio vulnificus (strain YJ016).